A 376-amino-acid polypeptide reads, in one-letter code: Queuine tRNA-ribosyltransferase (376 aa).

D90 functions as the Proton acceptor in the catalytic mechanism. Residues 90 to 94 (DSGGF), D144, Q193, and G220 each bind substrate. Positions 251–257 (GVGTPED) are RNA binding. Residue D270 is the Nucleophile of the active site. Positions 275 to 279 (TRNAR) are RNA binding; important for wobble base 34 recognition. 4 residues coordinate Zn(2+): C308, C310, C313, and H339.

It belongs to the queuine tRNA-ribosyltransferase family. Homodimer. Within each dimer, one monomer is responsible for RNA recognition and catalysis, while the other monomer binds to the replacement base PreQ1. The cofactor is Zn(2+).

It catalyses the reaction 7-aminomethyl-7-carbaguanine + guanosine(34) in tRNA = 7-aminomethyl-7-carbaguanosine(34) in tRNA + guanine. The protein operates within tRNA modification; tRNA-queuosine biosynthesis. In terms of biological role, catalyzes the base-exchange of a guanine (G) residue with the queuine precursor 7-aminomethyl-7-deazaguanine (PreQ1) at position 34 (anticodon wobble position) in tRNAs with GU(N) anticodons (tRNA-Asp, -Asn, -His and -Tyr). Catalysis occurs through a double-displacement mechanism. The nucleophile active site attacks the C1' of nucleotide 34 to detach the guanine base from the RNA, forming a covalent enzyme-RNA intermediate. The proton acceptor active site deprotonates the incoming PreQ1, allowing a nucleophilic attack on the C1' of the ribose to form the product. After dissociation, two additional enzymatic reactions on the tRNA convert PreQ1 to queuine (Q), resulting in the hypermodified nucleoside queuosine (7-(((4,5-cis-dihydroxy-2-cyclopenten-1-yl)amino)methyl)-7-deazaguanosine). The chain is Queuine tRNA-ribosyltransferase from Cupriavidus necator (strain ATCC 17699 / DSM 428 / KCTC 22496 / NCIMB 10442 / H16 / Stanier 337) (Ralstonia eutropha).